The following is a 362-amino-acid chain: Endolytic peptidoglycan transglycosylase RlpA (362 aa).

Positions 1–17 (MRKQWLGICIAAGMLAA) are cleaved as a signal peptide. Cys-18 is lipidated: N-palmitoyl cysteine. Residue Cys-18 is the site of S-diacylglycerol cysteine attachment. The segment at 198–276 (PDLSGGAGTS…PSTTPATSPA (79 aa)) is disordered. Over residues 262–276 (PVVTAPSTTPATSPA) the composition is skewed to low complexity. The region spanning 285-361 (QSASGNFMVQ…AQLQSFITTA (77 aa)) is the SPOR domain.

It belongs to the RlpA family.

Its subcellular location is the cell membrane. In terms of biological role, lytic transglycosylase with a strong preference for naked glycan strands that lack stem peptides. The sequence is that of Endolytic peptidoglycan transglycosylase RlpA from Escherichia coli (strain K12).